Reading from the N-terminus, the 597-residue chain is Probable serine/threonine-protein kinase DDB_G0281745 (597 aa).

A compositionally biased stretch (polar residues) spans 49–61 (TIDNSNGKQSTTP). The interval 49–320 (TIDNSNGKQS…RNNESTATTA (272 aa)) is disordered. The span at 72–97 (QPPPQQSQQQPPQPLKPIPATRPVPT) shows a compositional bias: pro residues. Positions 114–140 (TLPTTNSSTKYSTLPSRQFFEVSSSPG) are enriched in polar residues. Residues 157 to 168 (SLSSNQNGSNLN) are compositionally biased toward low complexity. Residues 208 to 234 (PSPPSPPLQSPQPTPQQQPPPLKPIPQ) are compositionally biased toward pro residues. Positions 235–264 (PQQQQQQQQQQQQQQQQQQQQQQQQQQQQQ) are enriched in low complexity. Residues 265-274 (QPPPLKPIPQ) are compositionally biased toward pro residues. The span at 275-301 (PQQSQPTQPIKSQIQIPITNTNGNTNG) shows a compositional bias: low complexity. The Protein kinase domain maps to 334-585 (KFVGNEIGSG…KVLDTIQNIY (252 aa)). ATP is bound by residues 340 to 348 (IGSGKYGSV) and K361. Catalysis depends on D454, which acts as the Proton acceptor.

This sequence belongs to the protein kinase superfamily. TKL Ser/Thr protein kinase family.

It catalyses the reaction L-seryl-[protein] + ATP = O-phospho-L-seryl-[protein] + ADP + H(+). It carries out the reaction L-threonyl-[protein] + ATP = O-phospho-L-threonyl-[protein] + ADP + H(+). This chain is Probable serine/threonine-protein kinase DDB_G0281745, found in Dictyostelium discoideum (Social amoeba).